We begin with the raw amino-acid sequence, 380 residues long: XK-related protein 9 (380 aa).

The next 8 membrane-spanning stretches (helical) occupy residues 10-30 (LLSA…AALV), 39-59 (VVCA…TQVF), 81-101 (LPVV…GIFI), 167-187 (CSLV…WALV), 228-248 (ALLL…WLLG), 264-284 (SLEF…FFNV), 294-314 (ITYY…LFVL), and 329-349 (TLMA…YLLL).

This sequence belongs to the XK family.

Its subcellular location is the cell membrane. It catalyses the reaction a 1,2-diacyl-sn-glycero-3-phospho-L-serine(in) = a 1,2-diacyl-sn-glycero-3-phospho-L-serine(out). Functionally, phospholipid scramblase that promotes phosphatidylserine exposure on apoptotic cell surface. Phosphatidylserine is a specific marker only present at the surface of apoptotic cells and acts as a specific signal for engulfment. The protein is XK-related protein 9 of Tetraodon nigroviridis (Spotted green pufferfish).